The primary structure comprises 176 residues: Interleukin-7 (176 aa).

The first 25 residues, 1–25 (MFHVSFRYIFGIPPLILVLLPVASS), serve as a signal peptide directing secretion. Disulfide bonds link Cys-27/Cys-165, Cys-58/Cys-153, and Cys-71/Cys-116. Residues Asn-94, Asn-115, and Asn-140 are each glycosylated (N-linked (GlcNAc...) asparagine). Residues 118–143 (SKGKGRKPPSLSEAQPTKNLEENKSS) form a disordered region.

The protein belongs to the IL-7/IL-9 family. As to quaternary structure, interacts with IL7R and CSF2RG.

It is found in the secreted. In terms of biological role, hematopoietic cytokine that plays an essential role in the development, expansion, and survival of naive and memory T-cells and B-cells thereby regulating the number of mature lymphocytes and maintaining lymphoid homeostasis. Mechanistically, exerts its biological effects through a receptor composed of IL7RA subunit and the cytokine receptor common subunit gamma/CSF2RG. Binding to the receptor leads to activation of various kinases including JAK1 or JAK3 depending on the cell type and subsequently propagation of signals through activation of several downstream signaling pathways including the PI3K/Akt/mTOR or the JAK-STAT5. This chain is Interleukin-7 (IL7), found in Bos taurus (Bovine).